The primary structure comprises 246 residues: tRNA (guanine-N(1)-)-methyltransferase (246 aa).

S-adenosyl-L-methionine contacts are provided by residues glycine 113 and 133-138 (IGDFVM).

This sequence belongs to the RNA methyltransferase TrmD family. In terms of assembly, homodimer.

It localises to the cytoplasm. The enzyme catalyses guanosine(37) in tRNA + S-adenosyl-L-methionine = N(1)-methylguanosine(37) in tRNA + S-adenosyl-L-homocysteine + H(+). Its function is as follows. Specifically methylates guanosine-37 in various tRNAs. In Vibrio atlanticus (strain LGP32) (Vibrio splendidus (strain Mel32)), this protein is tRNA (guanine-N(1)-)-methyltransferase.